The following is a 90-amino-acid chain: Probable Fe(2+)-trafficking protein (90 aa).

It belongs to the Fe(2+)-trafficking protein family.

Functionally, could be a mediator in iron transactions between iron acquisition and iron-requiring processes, such as synthesis and/or repair of Fe-S clusters in biosynthetic enzymes. The polypeptide is Probable Fe(2+)-trafficking protein (Laribacter hongkongensis (strain HLHK9)).